Consider the following 167-residue polypeptide: Ubiquitin-fold modifier-conjugating enzyme 1 (167 aa).

Cys-116 acts as the Glycyl thioester intermediate in catalysis. Lys-122 is covalently cross-linked (Glycyl lysine isopeptide (Lys-Gly) (interchain with G-Cter in UFM1)).

It belongs to the ubiquitin-conjugating enzyme family. UFC1 subfamily. In terms of assembly, interacts with UBA5 (via C-terminus). Interacts with UFL1. Interacts with UFM1. Interacts with KIRREL3. Ufmylated at Lys-122. Deufmylated by UFSP1.

E2-like enzyme which specifically catalyzes the second step in ufmylation. Accepts the ubiquitin-like modifier UFM1 from the E1 enzyme UBA5 and forms an intermediate with UFM1 via a thioester linkage. Ufmylation is involved in various processes, such as ribosome recycling, response to DNA damage, interferon response or reticulophagy (also called ER-phagy). The sequence is that of Ubiquitin-fold modifier-conjugating enzyme 1 from Bos taurus (Bovine).